The chain runs to 290 residues: Undecaprenyl-diphosphatase 2 (290 aa).

6 helical membrane passes run 104–124, 128–148, 174–194, 205–225, 237–257, and 268–288; these read WMVI…KDLI, LRNL…FILA, CLAL…GLFL, SFLL…PDAF, QLFV…AWLL, and FALW…FGVL.

This sequence belongs to the UppP family.

The protein localises to the cell membrane. It catalyses the reaction di-trans,octa-cis-undecaprenyl diphosphate + H2O = di-trans,octa-cis-undecaprenyl phosphate + phosphate + H(+). Catalyzes the dephosphorylation of undecaprenyl diphosphate (UPP). Confers resistance to bacitracin. This Corynebacterium jeikeium (strain K411) protein is Undecaprenyl-diphosphatase 2.